The primary structure comprises 257 residues: Type III pantothenate kinase (257 aa).

6-13 (DAGNTNIV) serves as a coordination point for ATP. Substrate contacts are provided by residues Y100 and 107 to 110 (GADR). D109 functions as the Proton acceptor in the catalytic mechanism. D129 contacts K(+). T132 serves as a coordination point for ATP. T184 provides a ligand contact to substrate.

The protein belongs to the type III pantothenate kinase family. In terms of assembly, homodimer. Requires NH4(+) as cofactor. K(+) is required as a cofactor.

It localises to the cytoplasm. The catalysed reaction is (R)-pantothenate + ATP = (R)-4'-phosphopantothenate + ADP + H(+). It participates in cofactor biosynthesis; coenzyme A biosynthesis; CoA from (R)-pantothenate: step 1/5. Its function is as follows. Catalyzes the phosphorylation of pantothenate (Pan), the first step in CoA biosynthesis. This is Type III pantothenate kinase from Clostridium botulinum (strain Alaska E43 / Type E3).